A 396-amino-acid chain; its full sequence is Putative F-box/kelch-repeat protein At4g11770 (396 aa).

The 47-residue stretch at 9 to 55 (PCNMPYLPDDLLLNILGRVSRLYYPILSLVSKRFRSLVGSLELYKIR) folds into the F-box domain. Kelch repeat units follow at residues 151-197 (YIYM…VLDG), 198-248 (KIYV…YEEK), and 250-296 (YLFG…VFYK).

This is Putative F-box/kelch-repeat protein At4g11770 from Arabidopsis thaliana (Mouse-ear cress).